The following is a 394-amino-acid chain: Phosphoglycerate kinase (394 aa).

Substrate contacts are provided by residues 21 to 23, R36, 59 to 62, R118, and R151; these read DFN and HLGR. At S183 the chain carries Phosphoserine. ATP is bound by residues K201 and G292. Position 299 is a phosphothreonine (T299). ATP-binding positions include E323 and 350 to 353; that span reads GGDS.

It belongs to the phosphoglycerate kinase family. In terms of assembly, monomer.

It localises to the cytoplasm. The catalysed reaction is (2R)-3-phosphoglycerate + ATP = (2R)-3-phospho-glyceroyl phosphate + ADP. It functions in the pathway carbohydrate degradation; glycolysis; pyruvate from D-glyceraldehyde 3-phosphate: step 2/5. This Bacillus thuringiensis (strain Al Hakam) protein is Phosphoglycerate kinase.